The following is a 342-amino-acid chain: MNTNDFDFYLPEELIAQTPLEKRDASKLLVIDHKNKTMTDSHFDHILDELKPGDALVMNNTRVLPARLYGEKQDTHGHVELLLLKNTEGDQWEVLAKPAKRLRVGTKVSFGDGRLIATVTKELEHGGRIVEFSYDGIFLEVLESLGEMPLPPYIHEKLEDRDRYQTVYAKENGSAAAPTAGLHFTKELLEKIETKGVKLVYLTLHVGLGTFRPVSVDNLDEHEMHSEFYQLSKEAADTLNAVKESGGRIVAVGTTSIRTLETIGSKFNGELKADSGWTNIFIKPGYQFKVVDAFSTNFHLPKSTLVMLVSAFAGRDFVLEAYNHAVEERYRFFSFGDAMFVK.

This sequence belongs to the QueA family. As to quaternary structure, monomer.

The protein resides in the cytoplasm. The catalysed reaction is 7-aminomethyl-7-carbaguanosine(34) in tRNA + S-adenosyl-L-methionine = epoxyqueuosine(34) in tRNA + adenine + L-methionine + 2 H(+). It functions in the pathway tRNA modification; tRNA-queuosine biosynthesis. In terms of biological role, transfers and isomerizes the ribose moiety from AdoMet to the 7-aminomethyl group of 7-deazaguanine (preQ1-tRNA) to give epoxyqueuosine (oQ-tRNA). The polypeptide is S-adenosylmethionine:tRNA ribosyltransferase-isomerase (Streptococcus agalactiae serotype V (strain ATCC BAA-611 / 2603 V/R)).